The chain runs to 31 residues: Cytolysin Oshem 2 (31 aa).

The protein localises to the secreted. The protein resides in the nematocyst. It localises to the target cell membrane. Its function is as follows. Cytolysin that shows weak hemolysis and weak myonecrosis. This chain is Cytolysin Oshem 2, found in Olindias sambaquiensis (Hydromedusa).